We begin with the raw amino-acid sequence, 92 residues long: MSSRKSRSRQTGASMITDEQINDLVLQLHRLLPELANNRRSGKVSASRVLQETCSYIRNLSKEVDDLSERLSQLLESTDSAQAALIRSLLMQ.

The region spanning 5-60 (KSRSRQTGASMITDEQINDLVLQLHRLLPELANNRRSGKVSASRVLQETCSYIRNL) is the bHLH domain.

The protein belongs to the bHLH protein family. In terms of assembly, interacts with HFR1 and IBH1. As to expression, expressed in roots, leaves, stems and flowers.

The protein localises to the nucleus. Functionally, atypical and probable non DNA-binding bHLH transcription factor that integrates multiple signaling pathways to regulate cell elongation and plant development. Regulates light responses by binding and inhibiting the activity of the bHLH transcription factor HFR1, a critical regulator of light signaling and shade avoidance. May have a regulatory role in various aspects of gibberellin-dependent growth and development. This is Transcription factor PRE4 (PRE4) from Arabidopsis thaliana (Mouse-ear cress).